We begin with the raw amino-acid sequence, 786 residues long: uncharacterized protein (786 aa).

Trp361–Asp362 contributes to the substrate binding site. Glu488 serves as the catalytic Proton donor. Lys590 to Gln591 contributes to the substrate binding site. Residues Thr762–Arg786 are disordered. The segment covering Leu766 to Arg776 has biased composition (pro residues).

It belongs to the glycosyl hydrolase 65 family.

This is an uncharacterized protein from Mycobacterium tuberculosis (strain CDC 1551 / Oshkosh).